The chain runs to 171 residues: Transcriptional repressor NrdR (171 aa).

The interval 1 to 21 (MQCPHCQHTDSRVLESRSSEN) is disordered. A zinc finger spans residues 3 to 34 (CPHCQHTDSRVLESRSSENGQSIRRRRECLQC). The span at 7–18 (QHTDSRVLESRS) shows a compositional bias: basic and acidic residues. An ATP-cone domain is found at 49–139 (ITVIKKDGKR…VYGNFQGIRD (91 aa)).

Belongs to the NrdR family. Zn(2+) is required as a cofactor.

Negatively regulates transcription of bacterial ribonucleotide reductase nrd genes and operons by binding to NrdR-boxes. The polypeptide is Transcriptional repressor NrdR (Microcystis aeruginosa (strain NIES-843 / IAM M-2473)).